A 303-amino-acid chain; its full sequence is Tyrosine recombinase XerC (303 aa).

In terms of domain architecture, Core-binding (CB) spans 6 to 92 (ASLAPQVEAF…ALRSFLNWLV (87 aa)). In terms of domain architecture, Tyr recombinase spans 113 to 292 (HLPKNIDVDE…DFQHLATVYD (180 aa)). Active-site residues include Arg-152, Lys-176, His-244, Arg-247, and His-270. The active-site O-(3'-phospho-DNA)-tyrosine intermediate is the Tyr-279.

This sequence belongs to the 'phage' integrase family. XerC subfamily. As to quaternary structure, forms a cyclic heterotetrameric complex composed of two molecules of XerC and two molecules of XerD, in which XerC interacts with XerD via its C-terminal region, XerD interacts with XerC via its C-terminal region and so on.

It localises to the cytoplasm. Its activity is regulated as follows. FtsK may regulate the catalytic switch between XerC and XerD in the heterotetrameric complex during the two steps of the recombination process. Its function is as follows. Site-specific tyrosine recombinase, which acts by catalyzing the cutting and rejoining of the recombining DNA molecules. Binds cooperatively to specific DNA consensus sequences that are separated from XerD binding sites by a short central region, forming the heterotetrameric XerC-XerD complex that recombines DNA substrates. The complex is essential to convert dimers of the bacterial chromosome into monomers to permit their segregation at cell division. It also contributes to the segregational stability of plasmids. In the complex XerC specifically exchanges the top DNA strands. The chain is Tyrosine recombinase XerC from Yersinia pestis.